Reading from the N-terminus, the 112-residue chain is ATP synthase epsilon chain (112 aa).

The protein belongs to the ATPase epsilon chain family. F-type ATPases have 2 components, CF(1) - the catalytic core - and CF(0) - the membrane proton channel. CF(1) has five subunits: alpha(3), beta(3), gamma(1), delta(1), epsilon(1). CF(0) has three main subunits: a, b and c.

The protein localises to the cell inner membrane. Functionally, produces ATP from ADP in the presence of a proton gradient across the membrane. The sequence is that of ATP synthase epsilon chain from Rickettsia peacockii (strain Rustic).